Here is a 225-residue protein sequence, read N- to C-terminus: MTVMAPVVTVDGPSGAGKGTLCKALAEALQWNLLDSGAIYRVLALAALHHHVDISSEDALVPLASHLDVRFVAEDGQLKVILEGEDVSHEIRTEAVGNTASQAAAFPRVREALLRRQRAFREAPGLIADGRDMGTVVFPDAPVKIFLDASAEERAQRRMLQLQGKGFNVNFERLLSEIKERDDRDRSRPVAPLVPAADALVLDSTEMTIDEVIARALAYAREILA.

12–20 (GPSGAGKGT) serves as a coordination point for ATP.

The protein belongs to the cytidylate kinase family. Type 1 subfamily.

It is found in the cytoplasm. The catalysed reaction is CMP + ATP = CDP + ADP. It catalyses the reaction dCMP + ATP = dCDP + ADP. The protein is Cytidylate kinase of Pectobacterium atrosepticum (strain SCRI 1043 / ATCC BAA-672) (Erwinia carotovora subsp. atroseptica).